The sequence spans 1025 residues: Interferon-induced helicase C domain-containing protein 1 (1025 aa).

2 CARD domains span residues 7 to 97 (AEDS…YVKP) and 110 to 190 (AHDE…QTGN). Residues Lys-23 and Lys-43 each participate in a glycyl lysine isopeptide (Lys-Gly) (interchain with G-Cter in ISG15) cross-link. A disordered region spans residues 273–297 (SLGHNSNMGRDSGTMGSDSDESVIQ). Polar residues predominate over residues 275–297 (GHNSNMGRDSGTMGSDSDESVIQ). 3 positions are modified to phosphoserine: Ser-289, Ser-291, and Ser-302. A Helicase ATP-binding domain is found at 317–510 (AQPALDGKNI…SEAEKHILNI (194 aa)). Phosphoserine occurs at positions 645 and 648. Residues 700–872 (KLIKLRNTIL…NMKPEEYAHK (173 aa)) form the Helicase C-terminal domain. Ser-828 is subject to Phosphoserine; by RIOK3. Residues 893–1020 (AKQYNDNPSL…PDLDYSEYCL (128 aa)) enclose the RLR CTR domain. Zn(2+)-binding residues include Cys-907, Cys-910, Cys-962, and Cys-964.

It belongs to the helicase family. RLR subfamily. Monomer in the absence of ligands and homodimerizes in the presence of dsRNA ligands. Can assemble into helical or linear polymeric filaments on long dsRNA. Interacts with MAVS/IPS1. Interacts (via the CARD domains) with TKFC, the interaction is inhibited by viral infection. Interacts with PCBP2. Interacts with NLRC5. Interacts with PIAS2-beta. Interacts with DDX60. Interacts with ANKRD17. Interacts with IKBKE. Interacts with ATG5 and ATG12, either as ATG5 and ATG12 monomers or as ATG12-ATG5 conjugates. Interacts with ZCCHC3; leading to activate IFIH1/MDA5. Interacts with RNF123. Interacts with DDX3X. Interacts with NOD1; this interaction promotes transcription of antiviral genes and inhibition of viral replication. Interacts with ECSIT; this interaction bridges IFIH1 to the MAVS complex at the mitochondrion. During apoptosis, processed into 3 cleavage products. The helicase-containing fragment, once liberated from the CARD domains, translocate from the cytoplasm to the nucleus. The processed protein significantly sensitizes cells to DNA degradation. In terms of processing, sumoylated. Sumoylation positively regulates its role in type I interferon induction and is enhanced by PIAS2-beta. Post-translationally, ubiquitinated by RNF125, leading to its degradation by the proteasome. USP17/UPS17L2-dependent deubiquitination positively regulates the receptor. Ubiquitinated by TRIM25 via 'Lys-63'-linked ubiquitination, promoting activation of IFIH1/MDA5. Ubiquitinated by TRIM40 via 'Lys-48'-linked ubiquitination; leading to proteasomal degradation. Ubiquitinated by TRIM65 via 'Lys-63'-linked ubiquitination, promoting activation of IFIH1/MDA5. ISGylated by ISG15. ISGylation increases upon infection with viruses. ISGylation at Lys-23 and Lys-43 is dependent of dephosphorylation, regulates mitochondrial translocation and oligomerization. Essential for IFIH1/MDA5-mediated cytokine responses and restriction of virus replication. In terms of processing, phosphorylated. Dephosphorylated by phsophatases PP1; dephosphorylation precedes and is required for ISGylation. As to expression, expression is prominent in lung, liver, kidney, heart and spleen (at protein level). Widely expressed at low level.

It localises to the cytoplasm. The protein resides in the nucleus. The protein localises to the mitochondrion. The catalysed reaction is ATP + H2O = ADP + phosphate + H(+). Innate immune receptor which acts as a cytoplasmic sensor of viral nucleic acids and plays a major role in sensing viral infection and in the activation of a cascade of antiviral responses including the induction of type I interferons and pro-inflammatory cytokines. Its ligands include mRNA lacking 2'-O-methylation at their 5' cap and long-dsRNA (&gt;1 kb in length). Upon ligand binding it associates with mitochondria antiviral signaling protein (MAVS/IPS1) which activates the IKK-related kinases: TBK1 and IKBKE which phosphorylate interferon regulatory factors: IRF3 and IRF7 which in turn activate transcription of antiviral immunological genes, including interferons (IFNs); IFN-alpha and IFN-beta. Responsible for detecting the Picornaviridae family members such as encephalomyocarditis virus (EMCV), mengo encephalomyocarditis virus (ENMG), and theiler's murine encephalomyelitis virus (TMEV). Can also detect other viruses such as dengue virus (DENV), west Nile virus (WNV), and reovirus. Also involved in antiviral signaling in response to viruses containing a dsDNA genome, such as vaccinia virus. Plays an important role in amplifying innate immune signaling through recognition of RNA metabolites that are produced during virus infection by ribonuclease L (RNase L). May play an important role in enhancing natural killer cell function and may be involved in growth inhibition and apoptosis in several tumor cell lines. This Mus musculus (Mouse) protein is Interferon-induced helicase C domain-containing protein 1.